A 335-amino-acid polypeptide reads, in one-letter code: tRNA N6-adenosine threonylcarbamoyltransferase (335 aa).

Positions 111 and 115 each coordinate Fe cation. Residues 133–137 (LISGG), D166, G179, and N276 contribute to the substrate site. D301 provides a ligand contact to Fe cation.

This sequence belongs to the KAE1 / TsaD family. Fe(2+) serves as cofactor.

The protein localises to the cytoplasm. The catalysed reaction is L-threonylcarbamoyladenylate + adenosine(37) in tRNA = N(6)-L-threonylcarbamoyladenosine(37) in tRNA + AMP + H(+). In terms of biological role, required for the formation of a threonylcarbamoyl group on adenosine at position 37 (t(6)A37) in tRNAs that read codons beginning with adenine. Is involved in the transfer of the threonylcarbamoyl moiety of threonylcarbamoyl-AMP (TC-AMP) to the N6 group of A37, together with TsaE and TsaB. TsaD likely plays a direct catalytic role in this reaction. This is tRNA N6-adenosine threonylcarbamoyltransferase from Wolbachia sp. subsp. Drosophila simulans (strain wRi).